We begin with the raw amino-acid sequence, 299 residues long: Methionyl-tRNA formyltransferase (299 aa).

Residue 109–112 (SLLP) participates in (6S)-5,6,7,8-tetrahydrofolate binding.

The protein belongs to the Fmt family.

The enzyme catalyses L-methionyl-tRNA(fMet) + (6R)-10-formyltetrahydrofolate = N-formyl-L-methionyl-tRNA(fMet) + (6S)-5,6,7,8-tetrahydrofolate + H(+). Its function is as follows. Attaches a formyl group to the free amino group of methionyl-tRNA(fMet). The formyl group appears to play a dual role in the initiator identity of N-formylmethionyl-tRNA by promoting its recognition by IF2 and preventing the misappropriation of this tRNA by the elongation apparatus. This is Methionyl-tRNA formyltransferase from Dinoroseobacter shibae (strain DSM 16493 / NCIMB 14021 / DFL 12).